The primary structure comprises 422 residues: MSGEAPRVAVDPFSCPMMTMQRKPEVHDAFREAGPVVEVNAPAGGPAWVITDDALAREVLADPRFVKDPDLAPTAWRGVDDGLDIPVPELRPFTLIAVDGEDHRRLRRIHAPAFNPRRLAERTDRIAAIADRLLTELADSSDRSGEPAELIGGFAYHFPLLVICELLGVPVTDPAMAREAVGVLKALGLGGPQSAGGDGTDPAGDVPDTSALESLLLEAVHAARRKDTRTMTRVLYERAQAEFGSVSDDQLVYMITGLIFAGHDTTGSFLGFLLAEVLAGRLAADADGDAISRFVEEALRHHPPVPYTLWRFAATEVVIRGVRLPRGAPVLVDIEGTNTDGRHHDAPHAFHPDRPSRRRLTFGDGPHYCIGEQLAQLESRTMIGVLRSRFPQARLAVPYEELRWCRKGAQTARLTDLPVWLR.

Position 369 (C369) interacts with heme.

The protein belongs to the cytochrome P450 family. As to quaternary structure, monomer. It depends on heme as a cofactor.

It is found in the cytoplasm. It catalyses the reaction 13-deoxydaunorubicin + NADPH + O2 + H(+) = 13-dihydrodaunorubicin + NADP(+) + H2O. The catalysed reaction is 13-dihydrodaunorubicin + NADPH + O2 + H(+) = daunorubicin + NADP(+) + 2 H2O. It carries out the reaction 13-deoxycarminomycin + NADPH + O2 + H(+) = 13-dihydrocarminomycin + NADP(+) + H2O. The enzyme catalyses 13-dihydrocarminomycin + NADPH + O2 + H(+) = carminomycin + NADP(+) + 2 H2O. It participates in antibiotic biosynthesis; daunorubicin biosynthesis. It functions in the pathway antibiotic biosynthesis; carminomycin biosynthesis. With respect to regulation, strongly inhibited by dithiothreitol and high ionic strength buffers. In terms of biological role, involved in the biosynthesis of the anthracyclines carminomycin and daunorubicin (daunomycin) which are aromatic polyketide antibiotics that exhibit high cytotoxicity and are widely applied in the chemotherapy of a variety of cancers. In vivo, DoxA catalyzes the C-13 hydroxylation of 13-deoxycarminomycin and 13-deoxydaunorubicin to yield 13-dihydrocarminomycin and 13-dihydrodaunorubicin, respectively, as well as the oxidation of these 13-dihydro-anthracyclines to their respective 13-keto forms, carminomycin and daunorubicin. In vitro, it also catalyzes the C-14 hydroxylation of daunorubicin to form doxorubicin (adriamycin), although this strain is not a doxorubicin producer. It is not able to accept anthracyclinones (aglycones) and anthracyclines with a 10-carbomethoxyl moiety. 13-oxidation of the anthracyclines possessing the 4-methoxy substitution is greatly favored. The anthracycline analog desacetyladriamycin can be oxidized to 10-hydroxydesacetyladriamycin. It can only use NADP. DoxA acts jointly with DauV. The polypeptide is Cytochrome P-450 monooxygenase DoxA (doxA) (Streptomyces sp. (strain C5)).